We begin with the raw amino-acid sequence, 389 residues long: 2-aminoethylphosphonate--pyruvate transaminase 1 (389 aa).

An N6-(pyridoxal phosphate)lysine modification is found at Lys-196.

It belongs to the class-V pyridoxal-phosphate-dependent aminotransferase family. PhnW subfamily. As to quaternary structure, homodimer. Requires pyridoxal 5'-phosphate as cofactor.

The catalysed reaction is (2-aminoethyl)phosphonate + pyruvate = phosphonoacetaldehyde + L-alanine. In terms of biological role, involved in phosphonate degradation. This is 2-aminoethylphosphonate--pyruvate transaminase 1 from Paraburkholderia xenovorans (strain LB400).